The sequence spans 349 residues: MADVINISRIPIFSKQEREFSDLQKGKEINEKILNKESDRFTLYPILYPDVWDFYKKAEASFWTAEEIDLSSDLKDFEKLNENEKHFIKHVLAFFAASDGIVLENLASKFLREVQITEAKKFYSFQIAVENIHSETYSLLIDNYIKDEKERLNLFHAIENIPAVKNKALWAAKWINDTNSFAERIVANACVEGILFSGSFCAIFWFKKQNKLHGLTFSNELISRDEGLHTDFNCLIYSLLDNKLPEQIIQNIVKEAVEVERSFICESLPCDLIGMNSRLMSQYIEFVADRLLECLGCSKIFHSKNPFNWMDLISLQGKTNFFEKRVADYQKSGVMAQRKDQVFCLNTEF.

Fe cation contacts are provided by aspartate 99, glutamate 130, and histidine 133. Tyrosine 137 is a catalytic residue. The Fe cation site is built by glutamate 192, glutamate 226, and histidine 229.

The protein belongs to the ribonucleoside diphosphate reductase small chain family. Heterodimer of a large and a small subunit. It depends on Fe cation as a cofactor.

The catalysed reaction is a 2'-deoxyribonucleoside 5'-diphosphate + [thioredoxin]-disulfide + H2O = a ribonucleoside 5'-diphosphate + [thioredoxin]-dithiol. Functionally, provides the precursors necessary for DNA synthesis. Catalyzes the biosynthesis of deoxyribonucleotides from the corresponding ribonucleotides. The chain is Ribonucleoside-diphosphate reductase small chain (RNR2) from Plasmodium falciparum (isolate Dd2).